Consider the following 916-residue polypeptide: DNA repair endonuclease XPF (916 aa).

The helicase-like stretch occupies residues 1 to 457; it reads MESGQPARRI…EVWMKFRKED (457 aa). Leucine-zipper regions lie at residues 233–254 and 270–298; these read LNAC…DLSL and LDPL…LQYL. At Lys289 the chain carries N6-acetyllysine. The tract at residues 460 to 487 is disordered; that stretch reads KRIRKSHKRPKDPQNKERASTKERTLKK. Positions 470 to 483 are enriched in basic and acidic residues; that stretch reads KDPQNKERASTKER. A Nuclear localization signal motif is present at residues 486–491; it reads KKKKRK. A Glycyl lysine isopeptide (Lys-Gly) (interchain with G-Cter in SUMO2) cross-link involves residue Lys500. Disordered regions lie at residues 502–526 and 660–679; these read EELE…ESCP and TASA…EQNG. Ser521 is subject to Phosphoserine. The nuclease stretch occupies residues 658–813; sequence RGTASADVST…PSPHATAELF (156 aa). An ERCC4 domain is found at 683 to 763; it reads SIVVDMREFR…RPVLLIEFDP (81 aa). Ser764 carries the post-translational modification Phosphoserine. The tract at residues 837-905 is hhH2, dimerization with ERCC1; sequence TLPESEKYNP…QLYDFIHTSF (69 aa). The residue at position 911 (Lys911) is an N6-acetyllysine.

Belongs to the XPF family. As to quaternary structure, heterodimer composed of ERCC1 and ERCC4/XPF. Interacts with SLX4/BTBD12; this interaction is direct and links the ERCC1-ERCC4/XPF complex to SLX4, which may coordinate the action of the structure-specific endonuclease during DNA repair. Mg(2+) is required as a cofactor. Post-translationally, acetylation at Lys-911 by KAT5 promotes interaction with ERCC1 by disrupting a salt bridge between Glu-907 and Lys-911, thereby exposing a second binding site for ERCC1. Deacetylated by SIRT1.

Its subcellular location is the nucleus. It is found in the chromosome. In terms of biological role, catalytic component of a structure-specific DNA repair endonuclease responsible for the 5-prime incision during DNA repair, and which is essential for nucleotide excision repair (NER) and interstrand cross-link (ICL) repair. The protein is DNA repair endonuclease XPF of Homo sapiens (Human).